The following is a 677-amino-acid chain: Fermitin family homolog 1 (677 aa).

Residues 96–653 (MLRLRLPNLK…HEYIGGYIFL (558 aa)) enclose the FERM domain. Phosphoserine occurs at positions 170, 179, and 361. In terms of domain architecture, PH spans 337–433 (ESEVDEIEAA…EVVPNVNVAE (97 aa)).

Belongs to the kindlin family. Interacts with the cytoplasmic domain of integrins ITGB1 and ITGB3.

It localises to the cytoplasm. It is found in the cytoskeleton. The protein resides in the cell junction. The protein localises to the focal adhesion. Its subcellular location is the cell projection. It localises to the ruffle membrane. Functionally, involved in cell adhesion. Contributes to integrin activation. When coexpressed with talin, potentiates activation of ITGA2B. Required for normal keratinocyte proliferation. Required for normal polarization of basal keratinocytes in skin, and for normal cell shape. Required for normal adhesion of keratinocytes to fibronectin and laminin, and for normal keratinocyte migration to wound sites. This chain is Fermitin family homolog 1 (FERMT1), found in Pongo abelii (Sumatran orangutan).